The primary structure comprises 120 residues: Large ribosomal subunit protein bL19 (120 aa).

Belongs to the bacterial ribosomal protein bL19 family.

This protein is located at the 30S-50S ribosomal subunit interface and may play a role in the structure and function of the aminoacyl-tRNA binding site. In Picosynechococcus sp. (strain ATCC 27264 / PCC 7002 / PR-6) (Agmenellum quadruplicatum), this protein is Large ribosomal subunit protein bL19.